The primary structure comprises 370 residues: Phospho-2-dehydro-3-deoxyheptonate aldolase, phenylalanine-inhibited (370 aa).

This sequence belongs to the class-I DAHP synthase family.

It carries out the reaction D-erythrose 4-phosphate + phosphoenolpyruvate + H2O = 7-phospho-2-dehydro-3-deoxy-D-arabino-heptonate + phosphate. It participates in metabolic intermediate biosynthesis; chorismate biosynthesis; chorismate from D-erythrose 4-phosphate and phosphoenolpyruvate: step 1/7. Its activity is regulated as follows. Inhibited by phenyalanine. In terms of biological role, stereospecific condensation of phosphoenolpyruvate (PEP) and D-erythrose-4-phosphate (E4P) giving rise to 3-deoxy-D-arabino-heptulosonate-7-phosphate (DAHP). The sequence is that of Phospho-2-dehydro-3-deoxyheptonate aldolase, phenylalanine-inhibited (ARO3) from Saccharomyces cerevisiae (strain ATCC 204508 / S288c) (Baker's yeast).